A 389-amino-acid polypeptide reads, in one-letter code: Xylose isomerase (389 aa).

Residues histidine 101 and aspartate 104 contribute to the active site. Positions 232, 268, 271, 296, 307, and 309 each coordinate Mg(2+).

Belongs to the xylose isomerase family. Homotetramer. The cofactor is Mg(2+).

Its subcellular location is the cytoplasm. It carries out the reaction alpha-D-xylose = alpha-D-xylulofuranose. The sequence is that of Xylose isomerase from Lactococcus lactis subsp. cremoris (strain SK11).